The following is a 363-amino-acid chain: Protein-glutamate methylesterase/protein-glutamine glutaminase 1 (363 aa).

A Response regulatory domain is found at 7 to 124; sequence KVLIVDDSAL…SRGMQEYARE (118 aa). Residue Asp58 is modified to 4-aspartylphosphate. The 193-residue stretch at 164–356 folds into the CheB-type methylesterase domain; the sequence is FSSTEKIIVI…RRLFGWLESQ (193 aa). Catalysis depends on residues Ser176, His202, and Asp298.

This sequence belongs to the CheB family. In terms of processing, phosphorylated by CheA. Phosphorylation of the N-terminal regulatory domain activates the methylesterase activity.

The protein resides in the cytoplasm. It catalyses the reaction [protein]-L-glutamate 5-O-methyl ester + H2O = L-glutamyl-[protein] + methanol + H(+). The catalysed reaction is L-glutaminyl-[protein] + H2O = L-glutamyl-[protein] + NH4(+). Functionally, involved in chemotaxis. Part of a chemotaxis signal transduction system that modulates chemotaxis in response to various stimuli. Catalyzes the demethylation of specific methylglutamate residues introduced into the chemoreceptors (methyl-accepting chemotaxis proteins or MCP) by CheR. Also mediates the irreversible deamidation of specific glutamine residues to glutamic acid. In Geobacter metallireducens (strain ATCC 53774 / DSM 7210 / GS-15), this protein is Protein-glutamate methylesterase/protein-glutamine glutaminase 1.